Here is a 379-residue protein sequence, read N- to C-terminus: Nematocin receptor 1 (379 aa).

At 19 to 48 (HNLYLFQMLELQENITDSQPMDPPSLEIMM) the chain is on the extracellular side. Residue N32 is glycosylated (N-linked (GlcNAc...) asparagine). Residues 49-69 (LHHLMIILVTLFGNTLLIYVI) traverse the membrane as a helical segment. The Cytoplasmic segment spans residues 70–95 (YKNNAVLRRKRVTPVQMLMLHMCAAD). The chain crosses the membrane as a helical span at residues 96 to 116 (ILFALISVGPTMAITATVPFF). Residues 117-124 (YGPNLLCK) lie on the Extracellular side of the membrane. A disulfide bond links C123 and C196. A helical transmembrane segment spans residues 125-145 (LTKFLQVIPMYASSFLLVAIS). Residues 146–168 (ADRYQAICRPLASMKSSIYNRPA) lie on the Cytoplasmic side of the membrane. Residues 169–189 (LYSGIAWTAAILFSTPQLYLF) form a helical membrane-spanning segment. Topologically, residues 190–207 (EKRNGDCSENYTTALQYQ) are extracellular. N-linked (GlcNAc...) asparagine glycosylation occurs at N199. Residues 208-228 (LYVCLFNSVVWLLPSAIAGWL) traverse the membrane as a helical segment. The Cytoplasmic portion of the chain corresponds to 229 to 289 (YLCVCKAVWK…DRRRVQTVKL (61 aa)). The chain crosses the membrane as a helical span at residues 290–310 (TLTIVAANFVLWAPFCITSVI). Over 311–320 (DAVWPTAINS) the chain is Extracellular. N-linked (GlcNAc...) asparagine glycosylation is present at N319. A helical membrane pass occupies residues 321–343 (TFATYIMFFGNLNSCMNPWLWFH). At 344 to 379 (FNRKQLKRACPCRKSSEPLIQSLVYVHVMTSEQSDF) the chain is on the cytoplasmic side.

Belongs to the G-protein coupled receptor 1 family. Vasopressin/oxytocin receptor subfamily. Detected in the left ASE gustatory neuron, the chemosensory neuron pairs ASH and ADF, and the PQR tail neuron. In males, detected in hook and tail sensory neurons involved in vulval sensing and hermaphrodite contact, and in spicule protractor muscles.

It localises to the cell membrane. Receptor for nematocin. The activity of this receptor is mediated by G proteins which activate a phosphatidylinositol-calcium second messenger system. The activity of this receptor may be modulated by ntr-2, leading to reduced intracellular cAMP production. Plays a role in gustatory associative learning. Also plays a role in male mating behavior. This is Nematocin receptor 1 from Caenorhabditis elegans.